Reading from the N-terminus, the 445-residue chain is Exodeoxyribonuclease 7 large subunit (445 aa).

It belongs to the XseA family. Heterooligomer composed of large and small subunits.

The protein resides in the cytoplasm. The catalysed reaction is Exonucleolytic cleavage in either 5'- to 3'- or 3'- to 5'-direction to yield nucleoside 5'-phosphates.. In terms of biological role, bidirectionally degrades single-stranded DNA into large acid-insoluble oligonucleotides, which are then degraded further into small acid-soluble oligonucleotides. The sequence is that of Exodeoxyribonuclease 7 large subunit from Shewanella pealeana (strain ATCC 700345 / ANG-SQ1).